A 314-amino-acid polypeptide reads, in one-letter code: Cyclic di-GMP binding protein TDE_0214 (314 aa).

Positions 146 to 234 (QKRRNERVVI…KTVRTEPVEG (89 aa)) constitute a PilZ domain. The segment covering 288 to 300 (TPVSSPIGTNTAP) has biased composition (polar residues). Residues 288-314 (TPVSSPIGTNTAPLTPPPADSAPEQIS) form a disordered region.

Cyclic-di-GMP binding protein that plays important roles in motility, chemotaxis, biofilm formation and virulence. The sequence is that of Cyclic di-GMP binding protein TDE_0214 from Treponema denticola (strain ATCC 35405 / DSM 14222 / CIP 103919 / JCM 8153 / KCTC 15104).